The primary structure comprises 464 residues: Protein FAM90A10 (464 aa).

Disordered stretches follow at residues 1 to 42 (MMAR…DPRL), 69 to 373 (VPAT…LPTA), and 415 to 437 (HSPEKPGAFLAQSPHVSEKSEAP). Composition is skewed to basic and acidic residues over residues 74-89 (GKKEGKENLKPWKPRG) and 97-114 (NKDKGEKEERPRQQDPQR). Over residues 180–197 (LASLSPLRKASLSSSSSL) the composition is skewed to low complexity.

The protein belongs to the FAM90 family.

In Homo sapiens (Human), this protein is Protein FAM90A10 (FAM90A10).